A 196-amino-acid chain; its full sequence is MVKSFYGYVRDAWKNPDETYVNELRWERLQVWRKQGSVTRIERPTRIDRARSLGYKAKQGIVVVRVNVRRGGLGHVRPNRGRRTQKMGKNKVSGGMSIQRIAEARADRKYPNLEVLNSYWVGEDGKHKWFEVILVDPHHPVIKSDKNLNWICDASIRGRATRGKTSAGRKGRGMSTRGKGTEKTRPSIRAHKSRGK.

2 stretches are compositionally biased toward basic residues: residues 160–172 (ATRGKTSAGRKGR) and 186–196 (PSIRAHKSRGK). The segment at 160–196 (ATRGKTSAGRKGRGMSTRGKGTEKTRPSIRAHKSRGK) is disordered.

Belongs to the eukaryotic ribosomal protein eL15 family.

This is Large ribosomal subunit protein eL15 (rpl15e) from Methanosarcina mazei (strain ATCC BAA-159 / DSM 3647 / Goe1 / Go1 / JCM 11833 / OCM 88) (Methanosarcina frisia).